The following is a 156-amino-acid chain: ATP synthase subunit b 2 (156 aa).

Residues 11–31 traverse the membrane as a helical segment; the sequence is LLAFIFFVWFCMKFVWPPIMG.

This sequence belongs to the ATPase B chain family. As to quaternary structure, F-type ATPases have 2 components, F(1) - the catalytic core - and F(0) - the membrane proton channel. F(1) has five subunits: alpha(3), beta(3), gamma(1), delta(1), epsilon(1). F(0) has three main subunits: a(1), b(2) and c(10-14). The alpha and beta chains form an alternating ring which encloses part of the gamma chain. F(1) is attached to F(0) by a central stalk formed by the gamma and epsilon chains, while a peripheral stalk is formed by the delta and b chains.

It is found in the cell inner membrane. Its function is as follows. F(1)F(0) ATP synthase produces ATP from ADP in the presence of a proton or sodium gradient. F-type ATPases consist of two structural domains, F(1) containing the extramembraneous catalytic core and F(0) containing the membrane proton channel, linked together by a central stalk and a peripheral stalk. During catalysis, ATP synthesis in the catalytic domain of F(1) is coupled via a rotary mechanism of the central stalk subunits to proton translocation. Component of the F(0) channel, it forms part of the peripheral stalk, linking F(1) to F(0). The protein is ATP synthase subunit b 2 of Pseudoalteromonas atlantica (strain T6c / ATCC BAA-1087).